A 453-amino-acid chain; its full sequence is ACT domain-containing protein ACR3 (453 aa).

ACT domains follow at residues 37–112 (LVKV…SASQ), 130–212 (SIEI…KFAR), 266–341 (VINV…RVSE), and 344–423 (SLEL…VPSR).

As to expression, expressed in roots, cotyledons, rosette and cauline leaves, sepals, style, and pedicels and tips of young developing siliques.

Functionally, may bind amino acids. This chain is ACT domain-containing protein ACR3, found in Arabidopsis thaliana (Mouse-ear cress).